We begin with the raw amino-acid sequence, 158 residues long: Dysbindin domain-containing protein 2 (158 aa).

The interval Phe79–Ser158 is disordered. Over residues Pro106–Ser131 the composition is skewed to low complexity. A phosphoserine mark is found at Ser119 and Ser120. Position 137 is a phosphothreonine (Thr137). At Ser142 the chain carries Phosphoserine. The span at Ser142–Gly151 shows a compositional bias: acidic residues.

The protein belongs to the dysbindin family. Monomer. Interacts with CSNK1D and CSNK1E.

Functionally, may modulate the activity of casein kinase-1. Inhibits CSNK1D autophosphorylation (in vitro). The sequence is that of Dysbindin domain-containing protein 2 (Dbndd2) from Mus musculus (Mouse).